A 401-amino-acid polypeptide reads, in one-letter code: Mu-type opioid receptor (401 aa).

Residues 1–69 (MDSSADPRNA…CPPTGSPSMV (69 aa)) lie on the Extracellular side of the membrane. N-linked (GlcNAc...) asparagine glycosylation is found at N9, N12, N34, N41, and N49. A helical membrane pass occupies residues 70–94 (TAITIMALYSIVCVVGLFGNFLVMY). Residues 95–107 (VIVRYTKMKTATN) lie on the Cytoplasmic side of the membrane. A helical transmembrane segment spans residues 108–132 (IYIFNLALADALATSTLPFQSVNYL). The Extracellular portion of the chain corresponds to 133–143 (MGTWPFGTILC). C143 and C220 are disulfide-bonded. A helical membrane pass occupies residues 144–166 (KIVISIDYYNMFTSIFTLCTMSV). Topologically, residues 167-186 (DRYIAVCHPVKALDFRTPRN) are cytoplasmic. Y169 carries the phosphotyrosine modification. The helical transmembrane segment at 187–208 (AKIINVCNWILSSAIGLPVMFM) threads the bilayer. Over 209–231 (ATTKYRNGSIDCALTFSHPTWYW) the chain is Extracellular. Residues 232 to 256 (ENLLKICVFIFAFIMPVLIITVCYG) form a helical membrane-spanning segment. Residues 257–280 (LMILRLKSVRMLSGSKEKDRNLRR) lie on the Cytoplasmic side of the membrane. The helical transmembrane segment at 281–307 (ITRMVLVVVAVFIVCWTPIHIYVIIKA) threads the bilayer. At 308 to 315 (LITIPETT) the chain is on the extracellular side. The chain crosses the membrane as a helical span at residues 316–339 (FQTVSWHFCIALGYTNSCLNPVLY). An NPxxY; plays a role in stabilizing the activated conformation of the receptor motif is present at residues 335–339 (NPVLY). At 340-401 (AFLDENFKRC…NLEAETAPLP (62 aa)) the chain is on the cytoplasmic side. A lipid anchor (S-palmitoyl cysteine) is attached at C354. Residues 365–385 (NSARIRQNTRDHPSTANTVDR) are disordered. S366 carries the phosphoserine modification. T373 carries the phosphothreonine modification. S378 carries the phosphoserine modification. Residue T397 is modified to Phosphothreonine.

Belongs to the G-protein coupled receptor 1 family. As to quaternary structure, forms homooligomers and heterooligomers with other GPCRs, such as OPRD1, OPRK1, OPRL1, NPFFR2, ADRA2A, SSTR2, CNR1 and CCR5 (probably in dimeric forms). Interacts with heterotrimeric G proteins; interaction with a heterotrimeric complex containing GNAI1, GNB1 and GNG2 stabilizes the active conformation of the receptor and increases its affinity for endomorphin-2, the synthetic opioid peptide DAMGO and for morphinan agonists. Interacts with PPL; the interaction disrupts agonist-mediated G-protein activation. Interacts (via C-terminus) with DNAJB4 (via C-terminus). Interacts with calmodulin; the interaction inhibits the constitutive activity of OPRM1; it abolishes basal and attenuates agonist-stimulated G-protein coupling. Interacts with FLNA, PLD2, RANBP9 and WLS and GPM6A. Interacts with RTP4. Interacts with SYP and GNAS. Interacts with RGS9, RGS17, RGS20, RGS4, PPP1R9B and HINT1. In terms of processing, phosphorylated. Differentially phosphorylated in basal and agonist-induced conditions. Agonist-mediated phosphorylation modulates receptor internalization. Phosphorylated by GRK2 in a agonist-dependent manner. Phosphorylation at Tyr-169 requires receptor activation, is dependent on non-receptor protein tyrosine kinase Src and results in a decrease in agonist efficacy by reducing G-protein coupling efficiency. Phosphorylated on tyrosine residues; the phosphorylation is involved in agonist-induced G-protein-independent receptor down-regulation. Phosphorylation at Ser-378 is involved in G-protein-dependent but not beta-arrestin-dependent activation of the ERK pathway. Ubiquitinated. A basal ubiquitination seems not to be related to degradation. Ubiquitination is increased upon formation of OPRM1:OPRD1 oligomers leading to proteasomal degradation; the ubiquitination is diminished by RTP4.

The protein resides in the cell membrane. It is found in the cell projection. Its subcellular location is the axon. It localises to the perikaryon. The protein localises to the dendrite. The protein resides in the endosome. In terms of biological role, receptor for endogenous opioids such as beta-endorphin and endomorphin. Receptor for natural and synthetic opioids including morphine, heroin, DAMGO, fentanyl, etorphine, buprenorphin and methadone. Also activated by enkephalin peptides, such as Met-enkephalin or Met-enkephalin-Arg-Phe, with higher affinity for Met-enkephalin-Arg-Phe. Agonist binding to the receptor induces coupling to an inactive GDP-bound heterotrimeric G-protein complex and subsequent exchange of GDP for GTP in the G-protein alpha subunit leading to dissociation of the G-protein complex with the free GTP-bound G-protein alpha and the G-protein beta-gamma dimer activating downstream cellular effectors. The agonist- and cell type-specific activity is predominantly coupled to pertussis toxin-sensitive G(i) and G(o) G alpha proteins, GNAI1, GNAI2, GNAI3 and GNAO1, and to a lesser extent to pertussis toxin-insensitive G alpha proteins GNAZ and GNA15. They mediate an array of downstream cellular responses, including inhibition of adenylate cyclase activity and both N-type and L-type calcium channels, activation of inward rectifying potassium channels, mitogen-activated protein kinase (MAPK), phospholipase C (PLC), phosphoinositide/protein kinase (PKC), phosphoinositide 3-kinase (PI3K) and regulation of NF-kappa-B. Also couples to adenylate cyclase stimulatory G alpha proteins. The selective temporal coupling to G-proteins and subsequent signaling can be regulated by RGSZ proteins, such as RGS9, RGS17 and RGS4. Phosphorylation by members of the GPRK subfamily of Ser/Thr protein kinases and association with beta-arrestins is involved in short-term receptor desensitization. Beta-arrestins associate with the GPRK-phosphorylated receptor and uncouple it from the G-protein thus terminating signal transduction. The phosphorylated receptor is internalized through endocytosis via clathrin-coated pits which involves beta-arrestins. The activation of the ERK pathway occurs either in a G-protein-dependent or a beta-arrestin-dependent manner and is regulated by agonist-specific receptor phosphorylation. Acts as a class A G-protein coupled receptor (GPCR) which dissociates from beta-arrestin at or near the plasma membrane and undergoes rapid recycling. Receptor down-regulation pathways are varying with the agonist and occur dependent or independent of G-protein coupling. Endogenous ligands induce rapid desensitization, endocytosis and recycling. Heterooligomerization with other GPCRs can modulate agonist binding, signaling and trafficking properties. Involved in neurogenesis. The polypeptide is Mu-type opioid receptor (OPRM1) (Sus scrofa (Pig)).